Reading from the N-terminus, the 246-residue chain is uncharacterized protein (246 aa).

A signal peptide spans 1–24 (MGAPLRHCLLVAAALSLGCGVAAA). The next 2 helical transmembrane spans lie at 71 to 91 (YYLGSISGKKVIVAMTGIGLV) and 104 to 124 (FTCASSIAIAAVMFSGVAGGA).

It is found in the cell membrane. This is an uncharacterized protein from Mycobacterium tuberculosis (strain ATCC 25618 / H37Rv).